A 468-amino-acid polypeptide reads, in one-letter code: ATP synthase subunit beta (468 aa).

ATP is bound at residue Gly155–Thr162.

This sequence belongs to the ATPase alpha/beta chains family. In terms of assembly, F-type ATPases have 2 components, CF(1) - the catalytic core - and CF(0) - the membrane proton channel. CF(1) has five subunits: alpha(3), beta(3), gamma(1), delta(1), epsilon(1). CF(0) has three main subunits: a(1), b(2) and c(9-12). The alpha and beta chains form an alternating ring which encloses part of the gamma chain. CF(1) is attached to CF(0) by a central stalk formed by the gamma and epsilon chains, while a peripheral stalk is formed by the delta and b chains.

It localises to the cell membrane. It catalyses the reaction ATP + H2O + 4 H(+)(in) = ADP + phosphate + 5 H(+)(out). Its function is as follows. Produces ATP from ADP in the presence of a proton gradient across the membrane. The catalytic sites are hosted primarily by the beta subunits. The chain is ATP synthase subunit beta from Streptococcus sanguinis (strain SK36).